The primary structure comprises 94 residues: YcgL domain-containing protein VP0875 (94 aa).

Residues 1 to 84 (MLCSIYKSSK…PPENLLEKYK (84 aa)) enclose the YcgL domain.

The polypeptide is YcgL domain-containing protein VP0875 (Vibrio parahaemolyticus serotype O3:K6 (strain RIMD 2210633)).